The chain runs to 602 residues: Proteasome-associated ATPase (602 aa).

Residues 13 to 89 (PDAAEVERLR…LREEVDRLGQ (77 aa)) are a coiled coil. 289 to 294 (GCGKTL) lines the ATP pocket. A docks into pockets in the proteasome alpha-ring region spans residues 601–602 (YL).

It belongs to the AAA ATPase family. Homohexamer. Assembles into a hexameric ring structure that caps the 20S proteasome core. Strongly interacts with the prokaryotic ubiquitin-like protein Pup through a hydrophobic interface; the interacting region of ARC lies in its N-terminal coiled-coil domain. There is one Pup binding site per ARC hexamer ring. Upon ATP-binding, the C-terminus of ARC interacts with the alpha-rings of the proteasome core, possibly by binding to the intersubunit pockets.

The protein operates within protein degradation; proteasomal Pup-dependent pathway. Its function is as follows. ATPase which is responsible for recognizing, binding, unfolding and translocation of pupylated proteins into the bacterial 20S proteasome core particle. May be essential for opening the gate of the 20S proteasome via an interaction with its C-terminus, thereby allowing substrate entry and access to the site of proteolysis. Thus, the C-termini of the proteasomal ATPase may function like a 'key in a lock' to induce gate opening and therefore regulate proteolysis. This Mycobacteroides abscessus (strain ATCC 19977 / DSM 44196 / CCUG 20993 / CIP 104536 / JCM 13569 / NCTC 13031 / TMC 1543 / L948) (Mycobacterium abscessus) protein is Proteasome-associated ATPase.